A 183-amino-acid polypeptide reads, in one-letter code: Crossover junction endodeoxyribonuclease RuvC (183 aa).

Active-site residues include Asp7, Glu66, and Asp138. Mg(2+)-binding residues include Asp7, Glu66, and Asp138.

Belongs to the RuvC family. As to quaternary structure, homodimer which binds Holliday junction (HJ) DNA. The HJ becomes 2-fold symmetrical on binding to RuvC with unstacked arms; it has a different conformation from HJ DNA in complex with RuvA. In the full resolvosome a probable DNA-RuvA(4)-RuvB(12)-RuvC(2) complex forms which resolves the HJ. It depends on Mg(2+) as a cofactor.

It is found in the cytoplasm. It carries out the reaction Endonucleolytic cleavage at a junction such as a reciprocal single-stranded crossover between two homologous DNA duplexes (Holliday junction).. The RuvA-RuvB-RuvC complex processes Holliday junction (HJ) DNA during genetic recombination and DNA repair. Endonuclease that resolves HJ intermediates. Cleaves cruciform DNA by making single-stranded nicks across the HJ at symmetrical positions within the homologous arms, yielding a 5'-phosphate and a 3'-hydroxyl group; requires a central core of homology in the junction. The consensus cleavage sequence is 5'-(A/T)TT(C/G)-3'. Cleavage occurs on the 3'-side of the TT dinucleotide at the point of strand exchange. HJ branch migration catalyzed by RuvA-RuvB allows RuvC to scan DNA until it finds its consensus sequence, where it cleaves and resolves the cruciform DNA. This Burkholderia ambifaria (strain ATCC BAA-244 / DSM 16087 / CCUG 44356 / LMG 19182 / AMMD) (Burkholderia cepacia (strain AMMD)) protein is Crossover junction endodeoxyribonuclease RuvC.